We begin with the raw amino-acid sequence, 149 residues long: D-aminoacyl-tRNA deacylase (149 aa).

A Gly-cisPro motif, important for rejection of L-amino acids motif is present at residues 137 to 138 (GP).

This sequence belongs to the DTD family. Homodimer.

The protein localises to the cytoplasm. The enzyme catalyses glycyl-tRNA(Ala) + H2O = tRNA(Ala) + glycine + H(+). The catalysed reaction is a D-aminoacyl-tRNA + H2O = a tRNA + a D-alpha-amino acid + H(+). In terms of biological role, an aminoacyl-tRNA editing enzyme that deacylates mischarged D-aminoacyl-tRNAs. Also deacylates mischarged glycyl-tRNA(Ala), protecting cells against glycine mischarging by AlaRS. Acts via tRNA-based rather than protein-based catalysis; rejects L-amino acids rather than detecting D-amino acids in the active site. By recycling D-aminoacyl-tRNA to D-amino acids and free tRNA molecules, this enzyme counteracts the toxicity associated with the formation of D-aminoacyl-tRNA entities in vivo and helps enforce protein L-homochirality. This Paracoccus denitrificans (strain Pd 1222) protein is D-aminoacyl-tRNA deacylase.